The following is a 75-amino-acid chain: Exodeoxyribonuclease 7 small subunit (75 aa).

The protein belongs to the XseB family. In terms of assembly, heterooligomer composed of large and small subunits.

It is found in the cytoplasm. The catalysed reaction is Exonucleolytic cleavage in either 5'- to 3'- or 3'- to 5'-direction to yield nucleoside 5'-phosphates.. Functionally, bidirectionally degrades single-stranded DNA into large acid-insoluble oligonucleotides, which are then degraded further into small acid-soluble oligonucleotides. The chain is Exodeoxyribonuclease 7 small subunit from Listeria innocua serovar 6a (strain ATCC BAA-680 / CLIP 11262).